Reading from the N-terminus, the 138-residue chain is Putative pre-16S rRNA nuclease (138 aa).

The protein belongs to the YqgF nuclease family.

The protein resides in the cytoplasm. Its function is as follows. Could be a nuclease involved in processing of the 5'-end of pre-16S rRNA. This Escherichia fergusonii (strain ATCC 35469 / DSM 13698 / CCUG 18766 / IAM 14443 / JCM 21226 / LMG 7866 / NBRC 102419 / NCTC 12128 / CDC 0568-73) protein is Putative pre-16S rRNA nuclease.